We begin with the raw amino-acid sequence, 501 residues long: Cytochrome P450 71B3 (501 aa).

Residues 2 to 22 (SILLYFFFLPVILSLIFMKKF) form a helical membrane-spanning segment. C445 serves as a coordination point for heme.

Belongs to the cytochrome P450 family. Requires heme as cofactor.

It localises to the membrane. This is Cytochrome P450 71B3 (CYP71B3) from Arabidopsis thaliana (Mouse-ear cress).